The sequence spans 353 residues: MMTRGATRMTRTVLGHMGPRYFSTAIFRNDAGTGVMSGAAVFMHGVPANPSEKAVVTWVRHFPVMGSRSAMSMALNDKQHDKKAENGSAAATGGGDGGDEKSVVSYWGVQPSKVTKEDGTEWKWNCFRPWETYKADLSIDLTKHHAPTTFLDKFAYWTVKSLRYPTDIFFQRRYGCRAMMLETVAAVPGMVGGMLLHCKSLRRFEQSGGWIKTLLDEAENERMHLMTFMEVAKPNWYERALVFAVQGVFFNAYFVTYLLSPKLAHRIVGYLEEEAIHSYTEFLKELDKGNIENVPAPAIAIDYCRLPKDSTLLDVVLVVRADEAHHRDVNHFASDIHYQGQQLKDSPAPIGYH.

A mitochondrion-targeting transit peptide spans 1 to 69 (MMTRGATRMT…RHFPVMGSRS (69 aa)). A disordered region spans residues 77 to 99 (DKQHDKKAENGSAAATGGGDGGD). Residues 178–198 (AMMLETVAAVPGMVGGMLLHC) traverse the membrane as a helical segment. Fe cation-binding residues include Glu-182, Glu-221, and His-224. A helical transmembrane segment spans residues 240 to 260 (ALVFAVQGVFFNAYFVTYLLS). Fe cation is bound by residues Glu-272, Glu-323, and His-326.

The protein belongs to the alternative oxidase family. In terms of assembly, homodimer; disulfide-linked. The cofactor is Fe cation.

The protein localises to the mitochondrion inner membrane. The enzyme catalyses 2 a ubiquinol + O2 = 2 a ubiquinone + 2 H2O. Its activity is regulated as follows. Stimulated by reduction of the disulfide bond and the presence of pyruvate. In terms of biological role, catalyzes the cyanide-resistant oxidation of ubiquinol and the reduction of molecular oxygen to water, but does not translocate protons and consequently is not linked to oxidative phosphorylation. May increase respiration when the cytochrome respiratory pathway is restricted, or in response to low temperatures. This is Ubiquinol oxidase 1, mitochondrial (AOX1) from Nicotiana tabacum (Common tobacco).